Reading from the N-terminus, the 429-residue chain is Serine--tRNA ligase (429 aa).

236-238 serves as a coordination point for L-serine; that stretch reads TAE. ATP is bound at residue 267-269; the sequence is RSE. Residue glutamate 290 participates in L-serine binding. 354–357 is a binding site for ATP; it reads EISS. Serine 390 lines the L-serine pocket.

This sequence belongs to the class-II aminoacyl-tRNA synthetase family. Type-1 seryl-tRNA synthetase subfamily. In terms of assembly, homodimer. The tRNA molecule binds across the dimer.

It localises to the cytoplasm. The enzyme catalyses tRNA(Ser) + L-serine + ATP = L-seryl-tRNA(Ser) + AMP + diphosphate + H(+). The catalysed reaction is tRNA(Sec) + L-serine + ATP = L-seryl-tRNA(Sec) + AMP + diphosphate + H(+). It functions in the pathway aminoacyl-tRNA biosynthesis; selenocysteinyl-tRNA(Sec) biosynthesis; L-seryl-tRNA(Sec) from L-serine and tRNA(Sec): step 1/1. Catalyzes the attachment of serine to tRNA(Ser). Is also able to aminoacylate tRNA(Sec) with serine, to form the misacylated tRNA L-seryl-tRNA(Sec), which will be further converted into selenocysteinyl-tRNA(Sec). The polypeptide is Serine--tRNA ligase (Photorhabdus laumondii subsp. laumondii (strain DSM 15139 / CIP 105565 / TT01) (Photorhabdus luminescens subsp. laumondii)).